Consider the following 340-residue polypeptide: Phospho-N-acetylmuramoyl-pentapeptide-transferase (340 aa).

A run of 10 helical transmembrane segments spans residues 5–25 (FILS…HLIN), 50–70 (TPTM…IIWT), 73–93 (SNPY…IGFI), 113–133 (FSLL…IIND), 147–167 (IIFN…IGTS), 178–198 (GLAI…SFIS), 218–238 (LTII…FNTY), 242–262 (IFMG…ISVL), 267–287 (ILLI…IIQV), and 318–338 (IIRF…MLKV).

It belongs to the glycosyltransferase 4 family. MraY subfamily. Mg(2+) serves as cofactor.

It localises to the cell membrane. The catalysed reaction is UDP-N-acetyl-alpha-D-muramoyl-L-alanyl-gamma-D-glutamyl-meso-2,6-diaminopimeloyl-D-alanyl-D-alanine + di-trans,octa-cis-undecaprenyl phosphate = di-trans,octa-cis-undecaprenyl diphospho-N-acetyl-alpha-D-muramoyl-L-alanyl-D-glutamyl-meso-2,6-diaminopimeloyl-D-alanyl-D-alanine + UMP. The protein operates within cell wall biogenesis; peptidoglycan biosynthesis. In terms of biological role, catalyzes the initial step of the lipid cycle reactions in the biosynthesis of the cell wall peptidoglycan: transfers peptidoglycan precursor phospho-MurNAc-pentapeptide from UDP-MurNAc-pentapeptide onto the lipid carrier undecaprenyl phosphate, yielding undecaprenyl-pyrophosphoryl-MurNAc-pentapeptide, known as lipid I. This chain is Phospho-N-acetylmuramoyl-pentapeptide-transferase, found in Buchnera aphidicola subsp. Baizongia pistaciae (strain Bp).